Reading from the N-terminus, the 153-residue chain is Prostaglandin E synthase (153 aa).

At 1–13 (MPPPSLAMVSGQA) the chain is on the lumenal side. A helical membrane pass occupies residues 14 to 42 (LPAFLLCSTLLVIKMYAVAVITGQVRLRK). Arginine 39 serves as a coordination point for glutathione. Over 43 to 61 (KAFANPEDALRHGGLQFHR) the chain is Cytoplasmic. The chain crosses the membrane as a helical span at residues 62-91 (DDQDVERCLRAHRNDMETIYPFLFLGLVYS). 74–78 (RNDME) is a binding site for glutathione. At 92 to 96 (FLGPD) the chain is on the lumenal side. A helical transmembrane segment spans residues 97 to 120 (PFVAQMHFLVFFLGRMVHTVAYLG). The glutathione site is built by histidine 114 and tyrosine 118. Topologically, residues 121–124 (KLRA) are cytoplasmic. Residues 125–153 (PTRSLAYTVAQLPCASMALQIVWEAARHL) form a helical membrane-spanning segment. 127 to 131 (RSLAY) is a binding site for glutathione.

This sequence belongs to the MAPEG family. In terms of assembly, homotrimer. Glutathione serves as cofactor.

The protein resides in the membrane. The protein localises to the cytoplasm. It is found in the perinuclear region. The enzyme catalyses prostaglandin H2 = prostaglandin E2. It catalyses the reaction 2-glyceryl-prostaglandin H2 = 2-glyceryl-prostaglandin E2. It carries out the reaction prostaglandin G2 = (15S)-15-hydroperoxy-prostaglandin E2. The catalysed reaction is 1-chloro-2,4-dinitrobenzene + glutathione = 2,4-dinitrophenyl-S-glutathione + chloride + H(+). The enzyme catalyses (5S)-hydroperoxy-(6E,8Z,11Z,14Z)-eicosatetraenoate + 2 glutathione = (5S)-hydroxy-(6E,8Z,11Z,14Z)-eicosatetraenoate + glutathione disulfide + H2O. The protein operates within lipid metabolism; prostaglandin biosynthesis. Functionally, terminal enzyme of the cyclooxygenase (COX)-2-mediated prostaglandin E2 (PGE2) biosynthetic pathway. Catalyzes the glutathione-dependent oxidoreduction of prostaglandin endoperoxide H2 (PGH2) to prostaglandin E2 (PGE2) in response to inflammatory stimuli. Plays a key role in inflammation response, fever and pain. Also catalyzes the oxidoreduction of endocannabinoids into prostaglandin glycerol esters and PGG2 into 15-hydroperoxy-PGE2. In addition, displays low glutathione transferase and glutathione-dependent peroxidase activities, toward 1-chloro-2,4-dinitrobenzene and 5-hydroperoxyicosatetraenoic acid (5-HPETE), respectively. This Equus caballus (Horse) protein is Prostaglandin E synthase (PTGES).